Consider the following 198-residue polypeptide: Suppressor of cytokine signaling 2 (198 aa).

The disordered stretch occupies residues M1–P29. Residues M1–S75 are interaction with AREL1. S30 carries the phosphoserine modification. Residues W48 to L156 form the SH2 domain. S52 is subject to Phosphoserine; by PKC. The SOCS box domain occupies Y151–Q197. Residue K173 forms a Glycyl lysine isopeptide (Lys-Gly) (interchain with G-Cter in ubiquitin) linkage.

Substrate-recognition component of the ECS(SOCS2) complex, composed of SOCS2, CUL5, ELOB, ELOC and RNF7/RBX2. Interacts with IGF1R. Interacts with DCUN1D1. Ubiquitinated; mediated by AREL1 and leading to its subsequent proteasomal degradation. Ubiquitination is dependent on its phosphorylation at Ser-52, by PKC. Ubiquitination is stimulated by LPS. In terms of processing, phosphorylation at Ser-52 by PKC facilitates its ubiquitination and proteasomal degradation. High expression in heart, placenta, lung, kidney and prostate. Predominantly expressed in pulmonary epithelia cells, specifically type II pneumocytes.

It is found in the cytoplasm. Its pathway is protein modification; protein ubiquitination. Substrate-binding is prevented by the covalent inhibitor MN551 that cross-links with Cys-111. Also inhibited by a MN551 derivative, MN714, which contains a pivaloyloxymethyl that allows cell permeability. Functionally, substrate-recognition component of a cullin-5-RING E3 ubiquitin-protein ligase complex (ECS complex, also named CRL5 complex), which mediates the ubiquitination and subsequent proteasomal degradation of target proteins, such as EPOR and GHR. Specifically recognizes and binds phosphorylated proteins via its SH2 domain, promoting their ubiquitination. The ECS(SOCS2) complex acts as a key regulator of growth hormone receptor (GHR) levels by mediating ubiquitination and degradation of GHR, following GHR phosphorylation by JAK2. The ECS(SOCS2) also catalyzes ubiquitination and degradation of JAK2-phosphorylated EPOR. This is Suppressor of cytokine signaling 2 from Homo sapiens (Human).